The chain runs to 766 residues: Darlin (766 aa).

ARM repeat units lie at residues 82 to 119, 167 to 208, 423 to 464, and 465 to 537; these read QLFE…NLTY, DFIQ…NLVD, EPNC…NLTL, and PTIN…ASMD. The interval 561–585 is disordered; sequence EEKEKTIEKTDEKTDEKTNEKKQSK. One copy of the ARM 5 repeat lies at 610–649; that stretch reads HQEKMKQLIEESVEPFFSLLQSPFPILQVEGAKGLVLLIK.

The protein belongs to the RAP1GDS1 family. In terms of assembly, binds to small GTPases racE, racC but not rab21. Binds preferentially to GDP-bound racE.

Part of a signaling pathway that initiates the aggregation and leads to the formation of aggregation centers or streams. Not essential for cytokinesis, pinocytosis or phagocytosis. Not essential for development, except in starvation-induced aggregation. The chain is Darlin (darA) from Dictyostelium discoideum (Social amoeba).